Reading from the N-terminus, the 533-residue chain is Zona pellucida sperm-binding protein 3 receptor (533 aa).

An N-terminal signal peptide occupies residues 1–28; sequence MFPRLQAVSAPALLQITLMAVLLAPVLG. 7 consecutive Sushi domains span residues 29 to 88, 89 to 150, 151 to 215, 216 to 275, 276 to 342, 343 to 408, and 409 to 467; these read DCGP…FCAK, KRCR…ECVI, VKCD…TCEK, VICR…TCEP, NGCI…GCER, VCCP…ACES, and AVCL…KCEW. Cystine bridges form between Cys30-Cys74, Cys60-Cys86, Cys91-Cys132, Cys118-Cys148, Cys153-Cys196, Cys182-Cys213, Cys218-Cys260, Cys246-Cys273, Cys278-Cys328, Cys312-Cys340, Cys345-Cys393, Cys378-Cys406, Cys411-Cys452, and Cys438-Cys465. N-linked (GlcNAc...) asparagine glycosylation is found at Asn68 and Asn77. N-linked (GlcNAc...) asparagine glycans are attached at residues Asn185, Asn191, and Asn200. Asn433 and Asn455 each carry an N-linked (GlcNAc...) asparagine glycan.

As to quaternary structure, homooligomer; disulfide-linked. May contain 6-8 monomers per oligomer. In terms of processing, the N-terminus may be blocked. As to expression, testis. Not expressed in heart, brain, liver or kidney.

Its subcellular location is the cytoplasmic vesicle. The protein resides in the secretory vesicle. It localises to the acrosome lumen. Probably involved in the formation of the dense core and M1 domain of the acrosome. May also regulate the release of certain secretory proteins following the acrosomal reaction. This chain is Zona pellucida sperm-binding protein 3 receptor (ZP3R), found in Cavia porcellus (Guinea pig).